A 141-amino-acid polypeptide reads, in one-letter code: MQLTNFTDFGLRALIYLASLPKGELTSITVVTETFDVSRNHMVKIINKLGQEGFIKTVRGKNGGICLGRPADQIIIGEVIRSIEPFNIVNCAPEFCHITPACRLKTALAKAKQAFLDELDQHTIQDMLTENNELLILLKRV.

The region spanning 2–129 (QLTNFTDFGL…DQHTIQDMLT (128 aa)) is the HTH rrf2-type domain. A DNA-binding region (H-T-H motif) is located at residues 28–51 (ITVVTETFDVSRNHMVKIINKLGQ). Residues cysteine 91, cysteine 96, and cysteine 102 each coordinate [2Fe-2S] cluster.

Requires [2Fe-2S] cluster as cofactor.

Functionally, nitric oxide-sensitive repressor of genes involved in protecting the cell against nitrosative stress. May require iron for activity. The sequence is that of HTH-type transcriptional repressor NsrR from Aliivibrio salmonicida (strain LFI1238) (Vibrio salmonicida (strain LFI1238)).